Consider the following 658-residue polypeptide: MVNSKGKITDSDPGSSHLLLNGLADKAGKNQDTEPENSLCSQYEEKVRPCIDLIDSLRALGVEQDLALPAIAVIGDQSSGKSSVLEALSGVALPRGSGIVTRCPLVLKLKKLLNKDEWRGKVSYQDFEMEISDPSEVEVEINKAQNAIAGEGQGISHELISLEVSSPHVPDLTLIDLPGITRVAVGNQPADIGHQTKKLIKKYILKQETINLVVVPCNVDIATTEALSMAQEVDPDGDRTIGILTKPDLVDRGTESKVVDVAQNLVCHLKKGYMIVKCRGQQDIQDQVTLTEALQKERDFFEDHPHFRVLLEEGRATVPCLADRLTSELITHICKTLPLLEKQIKENYEKITEELQKYGSDVPEEEHEKMFFLIEKINAFNHDITSLTEGEEFVGEDECRLFTKIRNEFHKWSLVIEKRFQQGYKAICKQIERFENRYRGRELPGFVNYKTFEIIIKQQIKELEEPAVYMLHTITDMVQAAFTDISEANFAEFFNLYRTTKSKIEDIKFELEKEAEKSIRLHFQMEQIVYCQDQVYQCALQRVREESDKEKDKKINSMCSKEVSSVNISLSDIFEHLLAYRQEATNRISSHIPLIIQYFILQVYGQKLQKDMLLLLHDKDTHNWLLKERSDTRDKRKLLKERLARLAQARRRLAKFPG.

Methionine 1 is subject to N-acetylmethionine. Positions 1–20 are disordered; the sequence is MVNSKGKITDSDPGSSHLLL. Residues 65 to 338 enclose the Dynamin-type G domain; it reads DLALPAIAVI…LITHICKTLP (274 aa). The G1 motif stretch occupies residues 75–82; it reads GDQSSGKS. 75-82 is a binding site for GTP; that stretch reads GDQSSGKS. The interval 100 to 102 is G2 motif; it reads VTR. The tract at residues 176–179 is G3 motif; it reads DLPG. GTP contacts are provided by residues 176-180 and 245-248; these read DLPGI and TKPD. A G4 motif region spans residues 245-248; it reads TKPD. Residues 277 to 280 are G5 motif; that stretch reads KCRG. A bundle signaling element (BSE) region spans residues 339–364; it reads LLEKQIKENYEKITEELQKYGSDVPE. The tract at residues 364-531 is middle domain; sequence EEEHEKMFFL…HFQMEQIVYC (168 aa). Positions 365–628 are stalk; that stretch reads EEHEKMFFLI…KDTHNWLLKE (264 aa). The tract at residues 551 to 554 is critical for lipid-binding; the sequence is KDKK. The GED domain maps to 570 to 658; it reads LSDIFEHLLA…ARRRLAKFPG (89 aa).

This sequence belongs to the TRAFAC class dynamin-like GTPase superfamily. Dynamin/Fzo/YdjA family. Homooligomer. Oligomerizes into multimeric filamentous or ring-like structures by virtue of its stalk domain. Oligomerization is critical for GTPase activity, protein stability, and recognition of viral target structures. Interacts with TRPC1, TRPC3, TRPC4, TRPC5, TRPC6 and TRPC7. Interacts with HSPA5. Interacts with TUBB/TUBB5. Interacts with DDX39A and DDX39B. Post-translationally, ISGylated.

It localises to the cytoplasm. The protein resides in the endoplasmic reticulum membrane. Its subcellular location is the perinuclear region. Interferon-induced dynamin-like GTPase with antiviral activity. This Otaria byronia (South American sea lion) protein is Interferon-induced GTP-binding protein Mx1 (MX1).